The chain runs to 164 residues: Cell division protein SepF (164 aa).

The segment at 29 to 57 is disordered; that stretch reads INKGRGASQQEYDEYYEDSTPTVTQKEDP.

It belongs to the SepF family. In terms of assembly, homodimer. Interacts with FtsZ.

Its subcellular location is the cytoplasm. Cell division protein that is part of the divisome complex and is recruited early to the Z-ring. Probably stimulates Z-ring formation, perhaps through the cross-linking of FtsZ protofilaments. Its function overlaps with FtsA. The chain is Cell division protein SepF from Exiguobacterium sibiricum (strain DSM 17290 / CCUG 55495 / CIP 109462 / JCM 13490 / 255-15).